The following is a 310-amino-acid chain: Oxygen-dependent coproporphyrinogen-III oxidase (310 aa).

Position 97 (S97) interacts with substrate. H101 and H111 together coordinate a divalent metal cation. The Proton donor role is filled by H111. 113–115 (NFR) serves as a coordination point for substrate. A divalent metal cation-binding residues include H150 and H180. Residues 245–280 (YVEFNLLYDRGTRFGLEFGGRTESILMSLPPRVVWR) are important for dimerization. Substrate is bound at residue 263-265 (GGR).

The protein belongs to the aerobic coproporphyrinogen-III oxidase family. As to quaternary structure, homodimer. A divalent metal cation is required as a cofactor.

It is found in the cytoplasm. It carries out the reaction coproporphyrinogen III + O2 + 2 H(+) = protoporphyrinogen IX + 2 CO2 + 2 H2O. Its pathway is porphyrin-containing compound metabolism; protoporphyrin-IX biosynthesis; protoporphyrinogen-IX from coproporphyrinogen-III (O2 route): step 1/1. Its function is as follows. Involved in the heme biosynthesis. Catalyzes the aerobic oxidative decarboxylation of propionate groups of rings A and B of coproporphyrinogen-III to yield the vinyl groups in protoporphyrinogen-IX. In Coxiella burnetii (strain RSA 493 / Nine Mile phase I), this protein is Oxygen-dependent coproporphyrinogen-III oxidase.